The primary structure comprises 138 residues: MSSRPPSSSGPAGIPKGAPSQRQLRVAEEIRHVLAGVFARQEFRDPELATTTFTINEVRISPDLKHATVFISRLGSSEIEPLLPNLKRVATYLRGEVAKVMRLRYAPELHFQPDSALEYAMHVDSLLRRPEVKRDLDE.

Residues 1–20 (MSSRPPSSSGPAGIPKGAPS) are compositionally biased toward low complexity. The disordered stretch occupies residues 1–21 (MSSRPPSSSGPAGIPKGAPSQ).

The protein belongs to the RbfA family. In terms of assembly, monomer. Binds 30S ribosomal subunits, but not 50S ribosomal subunits or 70S ribosomes.

It is found in the cytoplasm. Its function is as follows. One of several proteins that assist in the late maturation steps of the functional core of the 30S ribosomal subunit. Associates with free 30S ribosomal subunits (but not with 30S subunits that are part of 70S ribosomes or polysomes). Required for efficient processing of 16S rRNA. May interact with the 5'-terminal helix region of 16S rRNA. The protein is Ribosome-binding factor A of Granulibacter bethesdensis (strain ATCC BAA-1260 / CGDNIH1).